An 86-amino-acid chain; its full sequence is Small ribosomal subunit protein bS16c (86 aa).

This sequence belongs to the bacterial ribosomal protein bS16 family.

The protein localises to the plastid. It localises to the chloroplast. In Liriodendron tulipifera (Tuliptree), this protein is Small ribosomal subunit protein bS16c.